Reading from the N-terminus, the 1138-residue chain is Serine/threonine/tyrosine-interacting-like protein 2 (1138 aa).

Positions 1–20 (MATGGDAEEEQVVPNEEDEA) are disordered. The 149-residue stretch at 132-280 (NEVDEVWPNV…LRELNEKLME (149 aa)) folds into the Tyrosine-protein phosphatase domain. Phosphoserine is present on S291. Disordered regions lie at residues 309–336 (EEED…VTLI), 348–473 (EWRK…TWDM), 486–515 (ARKY…DDEE), 552–575 (KKDS…GEKN), 592–618 (QKKV…AKKR), 660–694 (AAPS…LPNL), 761–800 (SGCL…VRGT), and 850–1117 (FKKK…DEAI). A compositionally biased stretch (polar residues) spans 316 to 331 (SHLSGSSLGKASQVSK). S373 carries the post-translational modification Phosphoserine. Over residues 376 to 385 (DGDDCEDEDV) the composition is skewed to acidic residues. A compositionally biased stretch (basic and acidic residues) spans 386–409 (ERIIQEWQSRNERYQAKGREQWNR). T427 is subject to Phosphothreonine. Phosphoserine is present on residues S503 and S555. Composition is skewed to basic and acidic residues over residues 552–567 (KKDS…HGTE) and 595–614 (VGSE…DTVL). The span at 672–687 (SVLSTQSHRSHASNMP) shows a compositional bias: polar residues. Over residues 773 to 788 (SSDVQSVLSSTSSLTS) the composition is skewed to low complexity. Residues 858-871 (DEDMSVGDRDEDTD) show a composition bias toward acidic residues. Residue S862 is modified to Phosphoserine. Residues 878-897 (RYSSRSNSQKPETDASSSLA) show a composition bias toward polar residues. Position 929 is a phosphoserine (S929). A compositionally biased stretch (low complexity) spans 936–947 (SGSSRGRYTRSS). Basic and acidic residues predominate over residues 965-977 (RSQEQDTSFHEAN). The residue at position 966 (S966) is a Phosphoserine. A compositionally biased stretch (polar residues) spans 980 to 992 (TVRNTSRFSSSTT). S1016 carries the post-translational modification Phosphoserine. 2 stretches are compositionally biased toward basic and acidic residues: residues 1035-1059 (PEPR…KSDF) and 1074-1091 (RSEE…EEGR). The span at 1095–1106 (GRQSQYRRSTNQ) shows a compositional bias: polar residues. Residues 1107 to 1116 (QEEEEMDDEA) show a composition bias toward acidic residues.

This sequence belongs to the protein-tyrosine phosphatase family. Non-receptor class dual specificity subfamily.

The protein resides in the cytoplasm. It is found in the myofibril. The protein localises to the sarcomere. Functionally, may be required for myofiber maturation. The chain is Serine/threonine/tyrosine-interacting-like protein 2 (Styxl2) from Mus musculus (Mouse).